Here is a 351-residue protein sequence, read N- to C-terminus: Small ribosomal subunit biogenesis GTPase RsgA (351 aa).

The segment covering 1 to 12 (MAKHKLSKGQQR) has biased composition (basic residues). Residues 1-37 (MAKHKLSKGQQRRVRENHQRRLKKQDNKPEMDDNQLG) are disordered. Residues 13–31 (RVRENHQRRLKKQDNKPEM) show a composition bias toward basic and acidic residues. One can recognise a CP-type G domain in the interval 112–274 (YYDGIKPIAA…VIDSPGVREF (163 aa)). GTP contacts are provided by residues 160-163 (NKID) and 214-222 (GQSGVGKSS). Positions 298, 303, 305, and 311 each coordinate Zn(2+).

It belongs to the TRAFAC class YlqF/YawG GTPase family. RsgA subfamily. As to quaternary structure, monomer. Associates with 30S ribosomal subunit, binds 16S rRNA. Zn(2+) serves as cofactor.

The protein localises to the cytoplasm. One of several proteins that assist in the late maturation steps of the functional core of the 30S ribosomal subunit. Helps release RbfA from mature subunits. May play a role in the assembly of ribosomal proteins into the subunit. Circularly permuted GTPase that catalyzes slow GTP hydrolysis, GTPase activity is stimulated by the 30S ribosomal subunit. This Photorhabdus laumondii subsp. laumondii (strain DSM 15139 / CIP 105565 / TT01) (Photorhabdus luminescens subsp. laumondii) protein is Small ribosomal subunit biogenesis GTPase RsgA.